The primary structure comprises 22 residues: Hemoglobinase-like protein 2 (22 aa).

This sequence belongs to the peptidase C13 family.

It catalyses the reaction Hydrolysis of proteins and small molecule substrates at -Asn-|-Xaa- bonds.. This is Hemoglobinase-like protein 2 from Fasciola hepatica (Liver fluke).